The sequence spans 255 residues: tRNA (guanine-N(1)-)-methyltransferase (255 aa).

Residues G114 and 134-139 (IGDYIL) contribute to the S-adenosyl-L-methionine site.

This sequence belongs to the RNA methyltransferase TrmD family. In terms of assembly, homodimer.

It localises to the cytoplasm. It carries out the reaction guanosine(37) in tRNA + S-adenosyl-L-methionine = N(1)-methylguanosine(37) in tRNA + S-adenosyl-L-homocysteine + H(+). In terms of biological role, specifically methylates guanosine-37 in various tRNAs. This Blochmanniella pennsylvanica (strain BPEN) protein is tRNA (guanine-N(1)-)-methyltransferase.